The following is a 278-amino-acid chain: Replication protein A 32 kDa subunit B (278 aa).

A DNA-binding region (OB) is located at residues Val70 to Pro143.

This sequence belongs to the replication factor A protein 2 family. As to quaternary structure, heterotrimer of RPA1, RPA2 and RPA3 (canonical replication protein A complex). In terms of processing, phosphorylated in a cell-cycle-dependent manner (from the S phase until mitosis). In response to DNA damage, recruited to DNA-repair nuclear foci, as a hypophosphorylated form.

It is found in the nucleus. Functionally, component of the replication protein A complex (RPA) required for DNA recombination, repair and replication. The activity of RPA is mediated by single-stranded DNA binding and protein interactions. Required fo cell division in meristems. Involved in the maintenance of transcriptional epigenetic gene silencing (TGS) at specific loci (including some transposons) by regulating histone H3 acetylation, 'Lys-4' and 'Lys-9' methylation. The chain is Replication protein A 32 kDa subunit B (RPA2B) from Arabidopsis thaliana (Mouse-ear cress).